Reading from the N-terminus, the 246-residue chain is PF03932 family protein CutC (246 aa).

It belongs to the CutC family.

It is found in the cytoplasm. This is PF03932 family protein CutC from Treponema denticola (strain ATCC 35405 / DSM 14222 / CIP 103919 / JCM 8153 / KCTC 15104).